Reading from the N-terminus, the 440-residue chain is Histidinol dehydrogenase (440 aa).

Positions 139, 200, and 223 each coordinate NAD(+). Substrate-binding residues include Ser246, Gln268, and His271. Positions 268 and 271 each coordinate Zn(2+). Active-site proton acceptor residues include Glu336 and His337. Substrate-binding residues include His337, Asp370, Glu424, and His429. Position 370 (Asp370) interacts with Zn(2+). Residue His429 participates in Zn(2+) binding.

Belongs to the histidinol dehydrogenase family. It depends on Zn(2+) as a cofactor.

The enzyme catalyses L-histidinol + 2 NAD(+) + H2O = L-histidine + 2 NADH + 3 H(+). The protein operates within amino-acid biosynthesis; L-histidine biosynthesis; L-histidine from 5-phospho-alpha-D-ribose 1-diphosphate: step 9/9. Catalyzes the sequential NAD-dependent oxidations of L-histidinol to L-histidinaldehyde and then to L-histidine. The polypeptide is Histidinol dehydrogenase (Bordetella bronchiseptica (strain ATCC BAA-588 / NCTC 13252 / RB50) (Alcaligenes bronchisepticus)).